A 198-amino-acid chain; its full sequence is RxLR effector protein CRE4 (198 aa).

Residues 1-20 form the signal peptide; sequence MLRSFLLIVATVSLFGQCKP. A RxLR-dEER motif is present at residues 43 to 52; it reads RFVRTNDEER.

It belongs to the RxLR effector family.

The protein localises to the secreted. The protein resides in the host cytoplasm. Its subcellular location is the host nucleus. It localises to the host nucleolus. Functionally, effector that is involved in host plant infection. Contributes to virulence during the early infection stage, by inhibiting plant defense responses induced by both PAMP-triggered immunity (PTI) and effector-triggered immunity (ETI). This Phytophthora infestans (strain T30-4) (Potato late blight agent) protein is RxLR effector protein CRE4 (CRE4).